Consider the following 143-residue polypeptide: Histone H2B.2, sperm (143 aa).

The tract at residues 1-49 (MPKSPSKSSPRKGSPRKGSPRKGSPKRGGKGAKRAGKGGRRNVVKRRRR) is disordered. 5 consecutive short sequence motifs (SPKK motif) follow at residues 4–7 (SPSK), 9–12 (SPRK), 14–17 (SPRK), 19–22 (SPRK), and 24–27 (SPKR). Residues 9-49 (SPRKGSPRKGSPRKGSPKRGGKGAKRAGKGGRRNVVKRRRR) are compositionally biased toward basic residues. Ser14, Ser19, and Ser24 each carry phosphoserine. Ser129 carries an O-linked (GlcNAc) serine glycan. Lys137 participates in a covalent cross-link: Glycyl lysine isopeptide (Lys-Gly) (interchain with G-Cter in ubiquitin).

It belongs to the histone H2B family. As to quaternary structure, the nucleosome is a histone octamer containing two molecules each of H2A, H2B, H3 and H4 assembled in one H3-H4 heterotetramer and two H2A-H2B heterodimers. The octamer wraps approximately 147 bp of DNA. Monoubiquitination of Lys-137 gives a specific tag for epigenetic transcriptional activation and is also prerequisite for histone H3 'Lys-4' and 'Lys-79' methylation. In terms of processing, phosphorylated on SPKK motifs 3, 4 and 5; which may regulate DNA binding. Dephosphorylated during maturation of spermatids to mature sperm and rephosphorylated at fertilization. Post-translationally, glcNAcylation at Ser-129 promotes monoubiquitination of Lys-137. It fluctuates in response to extracellular glucose, and associates with transcribed genes.

It is found in the nucleus. Its subcellular location is the chromosome. In terms of biological role, core component of nucleosome. Nucleosomes wrap and compact DNA into chromatin, limiting DNA accessibility to the cellular machineries which require DNA as a template. Histones thereby play a central role in transcription regulation, DNA repair, DNA replication and chromosomal stability. DNA accessibility is regulated via a complex set of post-translational modifications of histones, also called histone code, and nucleosome remodeling. The chain is Histone H2B.2, sperm from Psammechinus miliaris (Green sea urchin).